Here is a 366-residue protein sequence, read N- to C-terminus: Aminomethyltransferase (366 aa).

This sequence belongs to the GcvT family. As to quaternary structure, the glycine cleavage system is composed of four proteins: P, T, L and H.

It carries out the reaction N(6)-[(R)-S(8)-aminomethyldihydrolipoyl]-L-lysyl-[protein] + (6S)-5,6,7,8-tetrahydrofolate = N(6)-[(R)-dihydrolipoyl]-L-lysyl-[protein] + (6R)-5,10-methylene-5,6,7,8-tetrahydrofolate + NH4(+). In terms of biological role, the glycine cleavage system catalyzes the degradation of glycine. The sequence is that of Aminomethyltransferase from Bacillus cereus (strain G9842).